A 378-amino-acid polypeptide reads, in one-letter code: Ribosomal RNA large subunit methyltransferase G (378 aa).

Belongs to the methyltransferase superfamily. RlmG family.

It is found in the cytoplasm. The catalysed reaction is guanosine(1835) in 23S rRNA + S-adenosyl-L-methionine = N(2)-methylguanosine(1835) in 23S rRNA + S-adenosyl-L-homocysteine + H(+). Specifically methylates the guanine in position 1835 (m2G1835) of 23S rRNA. The sequence is that of Ribosomal RNA large subunit methyltransferase G from Shewanella sp. (strain W3-18-1).